Here is a 202-residue protein sequence, read N- to C-terminus: Imidazole glycerol phosphate synthase subunit HisH 2 (202 aa).

The 202-residue stretch at Met1 to Ala202 folds into the Glutamine amidotransferase type-1 domain. Cys80 serves as the catalytic Nucleophile. Residues His183 and Glu185 contribute to the active site.

Heterodimer of HisH and HisF.

Its subcellular location is the cytoplasm. It catalyses the reaction 5-[(5-phospho-1-deoxy-D-ribulos-1-ylimino)methylamino]-1-(5-phospho-beta-D-ribosyl)imidazole-4-carboxamide + L-glutamine = D-erythro-1-(imidazol-4-yl)glycerol 3-phosphate + 5-amino-1-(5-phospho-beta-D-ribosyl)imidazole-4-carboxamide + L-glutamate + H(+). The catalysed reaction is L-glutamine + H2O = L-glutamate + NH4(+). It participates in amino-acid biosynthesis; L-histidine biosynthesis; L-histidine from 5-phospho-alpha-D-ribose 1-diphosphate: step 5/9. In terms of biological role, IGPS catalyzes the conversion of PRFAR and glutamine to IGP, AICAR and glutamate. The HisH subunit provides the glutamine amidotransferase activity that produces the ammonia necessary to HisF for the synthesis of IGP and AICAR. The polypeptide is Imidazole glycerol phosphate synthase subunit HisH 2 (hisH2) (Methanococcus maripaludis (strain DSM 14266 / JCM 13030 / NBRC 101832 / S2 / LL)).